The primary structure comprises 551 residues: Formate--tetrahydrofolate ligase (551 aa).

Residue 65 to 72 participates in ATP binding; it reads TPAGEGKT.

The protein belongs to the formate--tetrahydrofolate ligase family.

The catalysed reaction is (6S)-5,6,7,8-tetrahydrofolate + formate + ATP = (6R)-10-formyltetrahydrofolate + ADP + phosphate. It functions in the pathway one-carbon metabolism; tetrahydrofolate interconversion. In Thermosipho melanesiensis (strain DSM 12029 / CIP 104789 / BI429), this protein is Formate--tetrahydrofolate ligase.